We begin with the raw amino-acid sequence, 140 residues long: Class I hydrophobin B (140 aa).

Positions 1-16 (MKFLAVVSLLAATALA) are cleaved as a signal peptide. 4 cysteine pairs are disulfide-bonded: cysteine 42–cysteine 113, cysteine 50–cysteine 107, cysteine 51–cysteine 88, and cysteine 114–cysteine 133. An N-linked (GlcNAc...) asparagine glycan is attached at asparagine 117.

It belongs to the fungal hydrophobin family. Self-assembles to form functional amyloid fibrils called rodlets. Self-assembly into fibrillar rodlets occurs spontaneously at hydrophobic:hydrophilic interfaces and the rodlets further associate laterally to form amphipathic monolayers.

Its subcellular location is the secreted. The protein resides in the spore wall. Its function is as follows. Aerial growth, conidiation, and dispersal of filamentous fungi in the environment rely upon a capability of their secreting small amphipathic proteins called hydrophobins (HPBs) with low sequence identity. Class I can self-assemble into an outermost layer of rodlet bundles on aerial cell surfaces, conferring cellular hydrophobicity that supports fungal growth, development and dispersal; whereas Class II form highly ordered films at water-air interfaces through intermolecular interactions but contribute nothing to the rodlet structure. RodB is a class I hydrophobin that, unlike rodA, is not required for rodlet formation. The sequence is that of Class I hydrophobin B from Aspergillus fumigatus (strain ATCC MYA-4609 / CBS 101355 / FGSC A1100 / Af293) (Neosartorya fumigata).